A 326-amino-acid chain; its full sequence is Phospho-N-acetylmuramoyl-pentapeptide-transferase (326 aa).

The next 10 membrane-spanning stretches (helical) occupy residues 3–23 (LPTKIFFTSFIFGFILSPYFI), 51–71 (TPTMGGVVILTSSLLPILFWV), 77–97 (ILLLVSITLSFALIGFIDDYL), 113–133 (ILIQFIVALVGMSVFKLYFTE), 143–163 (GIMIDFSYLYAPFAAFIVVGS), 175–195 (GLAATQIIASFVSLGLVAYMT), 199–219 (ISVILFCITFIGATLSFLWFN), 225–245 (IFMGDIGSLSIGAALGLTSVL), 250–270 (VLFAVIGVIFVIETLSVVIQV), and 306–326 (IVIKFLIITIVCSVFTVAFLL).

Belongs to the glycosyltransferase 4 family. MraY subfamily. Requires Mg(2+) as cofactor.

The protein localises to the cell membrane. The catalysed reaction is UDP-N-acetyl-alpha-D-muramoyl-L-alanyl-gamma-D-glutamyl-meso-2,6-diaminopimeloyl-D-alanyl-D-alanine + di-trans,octa-cis-undecaprenyl phosphate = di-trans,octa-cis-undecaprenyl diphospho-N-acetyl-alpha-D-muramoyl-L-alanyl-D-glutamyl-meso-2,6-diaminopimeloyl-D-alanyl-D-alanine + UMP. It participates in cell wall biogenesis; peptidoglycan biosynthesis. Catalyzes the initial step of the lipid cycle reactions in the biosynthesis of the cell wall peptidoglycan: transfers peptidoglycan precursor phospho-MurNAc-pentapeptide from UDP-MurNAc-pentapeptide onto the lipid carrier undecaprenyl phosphate, yielding undecaprenyl-pyrophosphoryl-MurNAc-pentapeptide, known as lipid I. The sequence is that of Phospho-N-acetylmuramoyl-pentapeptide-transferase from Wolbachia sp. subsp. Brugia malayi (strain TRS).